A 98-amino-acid chain; its full sequence is Glutaredoxin 1 (98 aa).

The region spanning 1 to 98 (MNKAILHAII…KLLEGQPKKD (98 aa)) is the Glutaredoxin domain. Cysteine 17 and cysteine 20 are disulfide-bonded.

This sequence belongs to the glutaredoxin family. As to quaternary structure, monomer.

The protein localises to the cytoplasm. Functionally, has a glutathione-disulfide oxidoreductase activity in the presence of NADPH and glutathione reductase. Reduces low molecular weight disulfides and proteins. The protein is Glutaredoxin 1 (grxC1) of Rickettsia bellii (strain RML369-C).